Reading from the N-terminus, the 401-residue chain is MASGWDLASTYTPTTPSPQLALAPAQGYLPCMGPRDNSQLRPPEAESLSKTPKRRKKRYLRHDKPPYTYLAMIALVIQAAPFRRLKLAQIIRQVQAVFPFFRDDYEGWKDSIRHNLSSNRCFHKVPKDPAKPQAKGNFWAVDVSLIPAEALRLQNTALCRRWQNRGTHRAFAKDLSPYVLHGQPYQPPSPPPPPREGFSIKSLLGDPGKESTWPQHPGLPGQSTAAQAGTLSKGEEGMGTGPSSSSETPLWPLCSLPGPTIIEGESSQGEVIRPSPVTPDQGSWPLHLLEDSADSRGVPRRGSRASLWGQLPTSYLPIYTPNVVMPLATLPTTSCPQCPSSASPAYWSVGTESQGSQDLLCDLDSLFQGVPPNKSIYDVWVSHPRDLAAPAPGWLLSWYSM.

Residues 32-57 (MGPRDNSQLRPPEAESLSKTPKRRKK) are disordered. Positions 64–163 (KPPYTYLAMI…QNTALCRRWQ (100 aa)) form a DNA-binding region, fork-head. Residues 179–251 (VLHGQPYQPP…PSSSSETPLW (73 aa)) form a disordered region. A compositionally biased stretch (pro residues) spans 185 to 195 (YQPPSPPPPPR). The segment covering 221–230 (GQSTAAQAGT) has biased composition (polar residues). Positions 307-390 (LWGQLPTSYL…VSHPRDLAAP (84 aa)) are SMAD-interaction domain (SID). A Fast/FoxH1 motif 1 (FM1) motif is present at residues 311 to 315 (LPTSY). Residues 321–327 (PNVVMPL) carry the Fast/FoxH1 motif 2 (FM2) motif. The short motif at 363–384 (LDSLFQGVPPNKSIYDVWVSHP) is the SMAD interaction motif (SIM) element.

In terms of assembly, interacts with the MH2 domains of SMAD2 and SMAD3.

It is found in the nucleus. Functionally, transcriptional activator. Recognizes and binds to the DNA sequence 5'-TGT[GT][GT]ATT-3'. Required for induction of the goosecoid (GSC) promoter by TGF-beta or activin signaling. Forms a transcriptionally active complex containing FOXH1/SMAD2/SMAD4 on a site on the GSC promoter called TARE (TGF-beta/activin response element). The sequence is that of Forkhead box protein H1 (Foxh1) from Mus musculus (Mouse).